The sequence spans 185 residues: Ribosome-recycling factor (185 aa).

The protein belongs to the RRF family.

Its subcellular location is the cytoplasm. In terms of biological role, responsible for the release of ribosomes from messenger RNA at the termination of protein biosynthesis. May increase the efficiency of translation by recycling ribosomes from one round of translation to another. The polypeptide is Ribosome-recycling factor (Thermosipho africanus (strain TCF52B)).